The primary structure comprises 496 residues: Glycerol kinase (496 aa).

Threonine 12 is a binding site for ADP. ATP-binding residues include threonine 12, threonine 13, and serine 14. Threonine 12 serves as a coordination point for sn-glycerol 3-phosphate. An ADP-binding site is contributed by arginine 16. Sn-glycerol 3-phosphate is bound by residues arginine 82, glutamate 83, and tyrosine 134. 3 residues coordinate glycerol: arginine 82, glutamate 83, and tyrosine 134. Histidine 230 carries the phosphohistidine; by HPr modification. A sn-glycerol 3-phosphate-binding site is contributed by aspartate 244. Glycerol contacts are provided by aspartate 244 and glutamine 245. Positions 266 and 309 each coordinate ADP. ATP contacts are provided by threonine 266, glycine 309, glutamine 313, and glycine 410. Glycine 410 and asparagine 414 together coordinate ADP.

The protein belongs to the FGGY kinase family. As to quaternary structure, homotetramer and homodimer (in equilibrium). In terms of processing, the phosphoenolpyruvate-dependent sugar phosphotransferase system (PTS), including enzyme I, and histidine-containing protein (HPr) are required for the phosphorylation, which leads to the activation of the enzyme.

It carries out the reaction glycerol + ATP = sn-glycerol 3-phosphate + ADP + H(+). Its pathway is polyol metabolism; glycerol degradation via glycerol kinase pathway; sn-glycerol 3-phosphate from glycerol: step 1/1. Its activity is regulated as follows. Activated by phosphorylation and inhibited by fructose 1,6-bisphosphate (FBP). Functionally, key enzyme in the regulation of glycerol uptake and metabolism. Catalyzes the phosphorylation of glycerol to yield sn-glycerol 3-phosphate. The chain is Glycerol kinase from Bacillus subtilis (strain 168).